A 365-amino-acid polypeptide reads, in one-letter code: Sulfotransferase 2B1 (365 aa).

A 3'-phosphoadenylyl sulfate-binding site is contributed by 70 to 75 (KSGTTW). Substrate contacts are provided by Trp-98, Trp-103, and His-125. The active-site Proton acceptor is the His-125. Residues Arg-147, Ser-155, Tyr-210, 244–249 (STFSAM), and 274–276 (RKG) each bind 3'-phosphoadenylyl sulfate. The tract at residues 303 to 365 (GMPTFPWDED…ASETPHPRPS (63 aa)) is disordered. The span at 309–325 (WDEDPEEDGSPDPEPSP) shows a compositional bias: acidic residues. Ser-348 is subject to Phosphoserine.

This sequence belongs to the sulfotransferase 1 family. Phosphorylated. Expressed in the stratum granulosum-stratum corneum junction in the skin (at protein level). Expressed highly in placenta, prostate and trachea and lower expression in the small intestine and lung.

It localises to the cytoplasm. The protein localises to the cytosol. The protein resides in the microsome. It is found in the nucleus. It carries out the reaction an alcohol + 3'-phosphoadenylyl sulfate = an alkyl sulfate + adenosine 3',5'-bisphosphate + H(+). It catalyses the reaction 3beta-hydroxyandrost-5-en-17-one + 3'-phosphoadenylyl sulfate = dehydroepiandrosterone 3-sulfate + adenosine 3',5'-bisphosphate + H(+). The enzyme catalyses (24S)-hydroxycholesterol + 3'-phosphoadenylyl sulfate = (24S)-hydroxycholesterol 3-sulfate + adenosine 3',5'-bisphosphate + H(+). The catalysed reaction is cholesterol + 3'-phosphoadenylyl sulfate = cholesterol sulfate + adenosine 3',5'-bisphosphate + H(+). It carries out the reaction pregnenolone + 3'-phosphoadenylyl sulfate = pregnenolone sulfate + adenosine 3',5'-bisphosphate + H(+). Sulfotransferase that utilizes 3'-phospho-5'-adenylyl sulfate (PAPS) as sulfonate donor to catalyze the sulfate conjugation. Responsible for the sulfation of cholesterol. Catalyzes sulfation of the 3beta-hydroxyl groups of steroids, such as, pregnenolone and dehydroepiandrosterone (DHEA). Preferentially sulfonates cholesterol, while it also has significant activity with pregnenolone and DHEA. Plays a role in epidermal cholesterol metabolism and in the regulation of epidermal proliferation and differentiation. Its function is as follows. Sulfonates pregnenolone but not cholesterol. This chain is Sulfotransferase 2B1 (SULT2B1), found in Homo sapiens (Human).